The primary structure comprises 129 residues: Small ribosomal subunit protein uS12 (129 aa).

The protein belongs to the universal ribosomal protein uS12 family. As to quaternary structure, part of the 30S ribosomal subunit. Contacts proteins S8 and S17. May interact with IF1 in the 30S initiation complex.

In terms of biological role, with S4 and S5 plays an important role in translational accuracy. Functionally, interacts with and stabilizes bases of the 16S rRNA that are involved in tRNA selection in the A site and with the mRNA backbone. Located at the interface of the 30S and 50S subunits, it traverses the body of the 30S subunit contacting proteins on the other side and probably holding the rRNA structure together. The combined cluster of proteins S8, S12 and S17 appears to hold together the shoulder and platform of the 30S subunit. The protein is Small ribosomal subunit protein uS12 of Rickettsia typhi (strain ATCC VR-144 / Wilmington).